The following is a 123-amino-acid chain: Protein HesB, heterocyst (123 aa).

This sequence belongs to the HesB/IscA family.

Functionally, may be required for efficient nitrogen fixation. The chain is Protein HesB, heterocyst (hesB1) from Trichormus variabilis (strain ATCC 29413 / PCC 7937) (Anabaena variabilis).